Here is a 522-residue protein sequence, read N- to C-terminus: Maturase K (522 aa).

The protein belongs to the intron maturase 2 family. MatK subfamily.

It is found in the plastid. The protein resides in the chloroplast. Its function is as follows. Usually encoded in the trnK tRNA gene intron. Probably assists in splicing its own and other chloroplast group II introns. This is Maturase K from Schizorhiza neglecta (Lapeirousia neglecta).